We begin with the raw amino-acid sequence, 796 residues long: Protein translocase subunit SecA 2 (796 aa).

Residues glutamine 84, 102 to 106 (GEGKT), and aspartate 496 contribute to the ATP site.

It belongs to the SecA family. In terms of assembly, monomer and homodimer. Part of the essential Sec protein translocation apparatus which comprises SecA, SecYEG and auxiliary proteins SecDF. Other proteins may also be involved.

It is found in the cell membrane. The protein localises to the cytoplasm. It catalyses the reaction ATP + H2O + cellular proteinSide 1 = ADP + phosphate + cellular proteinSide 2.. Part of the Sec protein translocase complex. Interacts with the SecYEG preprotein conducting channel. Has a central role in coupling the hydrolysis of ATP to the transfer of proteins into and across the cell membrane, serving as an ATP-driven molecular motor driving the stepwise translocation of polypeptide chains across the membrane. This Staphylococcus epidermidis (strain ATCC 35984 / DSM 28319 / BCRC 17069 / CCUG 31568 / BM 3577 / RP62A) protein is Protein translocase subunit SecA 2.